Reading from the N-terminus, the 392-residue chain is Probable tRNA sulfurtransferase (392 aa).

A THUMP domain is found at 60-162 (QQVINDLQQV…HDCAIVYGHK (103 aa)). ATP-binding positions include 180–181 (LL), 205–206 (TF), Arg264, Gly286, and Gln295.

This sequence belongs to the ThiI family.

It is found in the cytoplasm. It catalyses the reaction [ThiI sulfur-carrier protein]-S-sulfanyl-L-cysteine + a uridine in tRNA + 2 reduced [2Fe-2S]-[ferredoxin] + ATP + H(+) = [ThiI sulfur-carrier protein]-L-cysteine + a 4-thiouridine in tRNA + 2 oxidized [2Fe-2S]-[ferredoxin] + AMP + diphosphate. It carries out the reaction [ThiS sulfur-carrier protein]-C-terminal Gly-Gly-AMP + S-sulfanyl-L-cysteinyl-[cysteine desulfurase] + AH2 = [ThiS sulfur-carrier protein]-C-terminal-Gly-aminoethanethioate + L-cysteinyl-[cysteine desulfurase] + A + AMP + 2 H(+). It functions in the pathway cofactor biosynthesis; thiamine diphosphate biosynthesis. Catalyzes the ATP-dependent transfer of a sulfur to tRNA to produce 4-thiouridine in position 8 of tRNAs, which functions as a near-UV photosensor. Also catalyzes the transfer of sulfur to the sulfur carrier protein ThiS, forming ThiS-thiocarboxylate. This is a step in the synthesis of thiazole, in the thiamine biosynthesis pathway. The sulfur is donated as persulfide by IscS. The polypeptide is Probable tRNA sulfurtransferase (Ureaplasma urealyticum serovar 10 (strain ATCC 33699 / Western)).